The sequence spans 80 residues: Protein CEBPZOS (80 aa).

A helical membrane pass occupies residues 15–31; that stretch reads GVLAAELVGVAGAYCLF.

Its subcellular location is the mitochondrion membrane. This Mus musculus (Mouse) protein is Protein CEBPZOS.